The following is a 431-amino-acid chain: Histidinol dehydrogenase (431 aa).

Positions 127, 189, and 212 each coordinate NAD(+). Substrate contacts are provided by S237, Q259, and H262. Residues Q259 and H262 each coordinate Zn(2+). Residues E326 and H327 each act as proton acceptor in the active site. Residues H327, D360, E414, and H419 each coordinate substrate. D360 is a Zn(2+) binding site. H419 contributes to the Zn(2+) binding site.

The protein belongs to the histidinol dehydrogenase family. Zn(2+) is required as a cofactor.

It carries out the reaction L-histidinol + 2 NAD(+) + H2O = L-histidine + 2 NADH + 3 H(+). Its pathway is amino-acid biosynthesis; L-histidine biosynthesis; L-histidine from 5-phospho-alpha-D-ribose 1-diphosphate: step 9/9. Its function is as follows. Catalyzes the sequential NAD-dependent oxidations of L-histidinol to L-histidinaldehyde and then to L-histidine. The sequence is that of Histidinol dehydrogenase from Xanthomonas oryzae pv. oryzae (strain KACC10331 / KXO85).